The primary structure comprises 128 residues: Large ribosomal subunit protein bL17 (128 aa).

This sequence belongs to the bacterial ribosomal protein bL17 family. As to quaternary structure, part of the 50S ribosomal subunit. Contacts protein L32.

In Streptococcus pneumoniae serotype 2 (strain D39 / NCTC 7466), this protein is Large ribosomal subunit protein bL17.